Reading from the N-terminus, the 76-residue chain is Accessory gland-specific peptide 57Dc (76 aa).

The first 20 residues, 1–20 (MHGTHFLILLLLCGVLGSNG), serve as a signal peptide directing secretion.

In terms of processing, cAMP-dependent phosphorylation. In terms of tissue distribution, lumen fluid of male accessory glands, becomes seminal fluid.

It localises to the secreted. Its function is as follows. Transferred from male to female during mating and may affect egglaying and behavior after mating. The polypeptide is Accessory gland-specific peptide 57Dc (Mst57Dc) (Drosophila melanogaster (Fruit fly)).